A 117-amino-acid chain; its full sequence is uncharacterized protein (117 aa).

This is an uncharacterized protein from Saccharomyces cerevisiae (strain ATCC 204508 / S288c) (Baker's yeast).